The primary structure comprises 205 residues: Holliday junction branch migration complex subunit RuvA (205 aa).

The segment at Met-1–Asn-68 is domain I. A domain II region spans residues Thr-69 to Ala-146. Positions Pro-147–Val-151 are flexible linker. The domain III stretch occupies residues Thr-152–Gln-205.

This sequence belongs to the RuvA family. In terms of assembly, homotetramer. Forms an RuvA(8)-RuvB(12)-Holliday junction (HJ) complex. HJ DNA is sandwiched between 2 RuvA tetramers; dsDNA enters through RuvA and exits via RuvB. An RuvB hexamer assembles on each DNA strand where it exits the tetramer. Each RuvB hexamer is contacted by two RuvA subunits (via domain III) on 2 adjacent RuvB subunits; this complex drives branch migration. In the full resolvosome a probable DNA-RuvA(4)-RuvB(12)-RuvC(2) complex forms which resolves the HJ.

It localises to the cytoplasm. In terms of biological role, the RuvA-RuvB-RuvC complex processes Holliday junction (HJ) DNA during genetic recombination and DNA repair, while the RuvA-RuvB complex plays an important role in the rescue of blocked DNA replication forks via replication fork reversal (RFR). RuvA specifically binds to HJ cruciform DNA, conferring on it an open structure. The RuvB hexamer acts as an ATP-dependent pump, pulling dsDNA into and through the RuvAB complex. HJ branch migration allows RuvC to scan DNA until it finds its consensus sequence, where it cleaves and resolves the cruciform DNA. This is Holliday junction branch migration complex subunit RuvA from Desulfosudis oleivorans (strain DSM 6200 / JCM 39069 / Hxd3) (Desulfococcus oleovorans).